The chain runs to 176 residues: Co-chaperone protein HscB (176 aa).

A J domain is found at 2–74 (DYFTLFGLPA…LMRAEYLLSL (73 aa)).

It belongs to the HscB family. As to quaternary structure, interacts with HscA and stimulates its ATPase activity. Interacts with IscU.

Co-chaperone involved in the maturation of iron-sulfur cluster-containing proteins. Seems to help targeting proteins to be folded toward HscA. The protein is Co-chaperone protein HscB of Escherichia coli O7:K1 (strain IAI39 / ExPEC).